A 333-amino-acid chain; its full sequence is Acetyltransferase Pat (333 aa).

Residues 88–91, 98–99, and R138 each bind 3',5'-cyclic AMP; these read GEIA and RS. An N-acetyltransferase domain is found at 156–318; the sequence is LMLRPVLPGD…GELSLGREMV (163 aa). Residue H173 participates in substrate binding. D214 contacts Mg(2+). Substrate-binding positions include 238–240, 246–251, N277, and R286; these read FTV and GRGIGS.

Homodimer. The cofactor is Mg(2+).

Autoinhibited and allosterically activated by 3,5-cyclic adenosine monophosphate (cAMP). An extensive conformational rearrangement relieves this autoinhibition by means of a substrate-mimicking lid that covers the protein-substrate binding surface. In terms of biological role, catalyzes specifically the acetylation of the epsilon-amino group of a highly conserved lysine residue in acetyl-CoA synthetase (ACS). This acetylation results in the inactivation of ACS activity and could be important for mycobacteria to adjust to environmental changes. This Mycobacterium tuberculosis (strain ATCC 25618 / H37Rv) protein is Acetyltransferase Pat.